The chain runs to 217 residues: MYFQIAIDGPSSSGKSSVAKTVARQLGFEYFSTGKMYRAFAYVMQVNRLDVNLLLKVINQINWRFEHEKVFYNNADISEVILNQEIAQLASNLATNPEVRKMAVLRQQALAKNTNIVMDGRDIGTVVLKDAQLKYFLDAKPEIRAQRRAQDLGIAYDSDKAFQELVAEIKHRDAVDTSRTADPLVQAPDAIYIDSSNLTFQQVVELMVQQARTVFKL.

An ATP-binding site is contributed by 9 to 17; the sequence is GPSSSGKSS.

Belongs to the cytidylate kinase family. Type 1 subfamily.

It localises to the cytoplasm. It catalyses the reaction CMP + ATP = CDP + ADP. The catalysed reaction is dCMP + ATP = dCDP + ADP. This Mycoplasma pneumoniae (strain ATCC 29342 / M129 / Subtype 1) (Mycoplasmoides pneumoniae) protein is Cytidylate kinase.